The sequence spans 116 residues: Hydrogenase maturation factor HypA (116 aa).

His-2 lines the Ni(2+) pocket. Zn(2+) is bound by residues Cys-73, Cys-76, Cys-89, and Cys-92.

This sequence belongs to the HypA/HybF family.

Involved in the maturation of [NiFe] hydrogenases. Required for nickel insertion into the metal center of the hydrogenase. The polypeptide is Hydrogenase maturation factor HypA (Chlorobium limicola (strain DSM 245 / NBRC 103803 / 6330)).